A 289-amino-acid polypeptide reads, in one-letter code: Protease HtpX (289 aa).

2 helical membrane-spanning segments follow: residues isoleucine 4 to isoleucine 24 and leucine 36 to methionine 56. Residue histidine 143 coordinates Zn(2+). Glutamate 144 is an active-site residue. Residue histidine 147 coordinates Zn(2+). 2 helical membrane-spanning segments follow: residues leucine 158–valine 178 and methionine 192–leucine 212. Glutamate 221 is a Zn(2+) binding site.

The protein belongs to the peptidase M48B family. Zn(2+) is required as a cofactor.

It is found in the cell inner membrane. The protein is Protease HtpX of Vibrio campbellii (strain ATCC BAA-1116).